A 681-amino-acid chain; its full sequence is Heat shock 70 kDa protein (681 aa).

Residues 655–665 (NFPGGMPGAGM) show a composition bias toward gly residues. A disordered region spans residues 655–681 (NFPGGMPGAGMPGNAPAGSGPTVEEVD). Positions 666 to 675 (PGNAPAGSGP) are enriched in low complexity.

It belongs to the heat shock protein 70 family.

This is Heat shock 70 kDa protein from Plasmodium falciparum.